Here is a 194-residue protein sequence, read N- to C-terminus: NADH-quinone oxidoreductase subunit B (194 aa).

The [4Fe-4S] cluster site is built by Cys-73, Cys-74, Cys-138, and Cys-168.

This sequence belongs to the complex I 20 kDa subunit family. In terms of assembly, NDH-1 is composed of 14 different subunits. Subunits NuoB, C, D, E, F, and G constitute the peripheral sector of the complex. [4Fe-4S] cluster is required as a cofactor.

It is found in the cell inner membrane. It carries out the reaction a quinone + NADH + 5 H(+)(in) = a quinol + NAD(+) + 4 H(+)(out). Its function is as follows. NDH-1 shuttles electrons from NADH, via FMN and iron-sulfur (Fe-S) centers, to quinones in the respiratory chain. The immediate electron acceptor for the enzyme in this species is believed to be ubiquinone. Couples the redox reaction to proton translocation (for every two electrons transferred, four hydrogen ions are translocated across the cytoplasmic membrane), and thus conserves the redox energy in a proton gradient. This is NADH-quinone oxidoreductase subunit B from Rhizobium leguminosarum bv. trifolii (strain WSM2304).